We begin with the raw amino-acid sequence, 77 residues long: Large ribosomal subunit protein bL28 (77 aa).

It belongs to the bacterial ribosomal protein bL28 family.

The sequence is that of Large ribosomal subunit protein bL28 from Polynucleobacter necessarius subsp. necessarius (strain STIR1).